A 466-amino-acid polypeptide reads, in one-letter code: Asparagine--tRNA ligase (466 aa).

Belongs to the class-II aminoacyl-tRNA synthetase family. In terms of assembly, homodimer.

The protein localises to the cytoplasm. The catalysed reaction is tRNA(Asn) + L-asparagine + ATP = L-asparaginyl-tRNA(Asn) + AMP + diphosphate + H(+). The sequence is that of Asparagine--tRNA ligase from Klebsiella pneumoniae subsp. pneumoniae (strain ATCC 700721 / MGH 78578).